The primary structure comprises 117 residues: Immunoglobulin kappa variable 1-17 (117 aa).

The signal sequence occupies residues 1-22 (MDMRVPAQLLGLLLLWFPGARC). Residues 23–45 (DIQMTQSPSSLSASVGDRVTITC) form a framework-1 region. Residues 24–117 (IQMTQSPSSL…YYCLQHNSYP (94 aa)) form the Ig-like domain. Cys45 and Cys110 form a disulfide bridge. The complementarity-determining-1 stretch occupies residues 46–56 (RASQGIRNDLG). Residues 57-71 (WYQQKPGKAPKRLIY) are framework-2. A complementarity-determining-2 region spans residues 72–78 (AASSLQS). The interval 79–110 (GVPSRFSGSGSGTEFTLTISSLQPEDFATYYC) is framework-3. Residues 111-117 (LQHNSYP) form a complementarity-determining-3 region.

In terms of assembly, immunoglobulins are composed of two identical heavy chains and two identical light chains; disulfide-linked.

Its subcellular location is the secreted. It is found in the cell membrane. Functionally, v region of the variable domain of immunoglobulin light chains that participates in the antigen recognition. Immunoglobulins, also known as antibodies, are membrane-bound or secreted glycoproteins produced by B lymphocytes. In the recognition phase of humoral immunity, the membrane-bound immunoglobulins serve as receptors which, upon binding of a specific antigen, trigger the clonal expansion and differentiation of B lymphocytes into immunoglobulins-secreting plasma cells. Secreted immunoglobulins mediate the effector phase of humoral immunity, which results in the elimination of bound antigens. The antigen binding site is formed by the variable domain of one heavy chain, together with that of its associated light chain. Thus, each immunoglobulin has two antigen binding sites with remarkable affinity for a particular antigen. The variable domains are assembled by a process called V-(D)-J rearrangement and can then be subjected to somatic hypermutations which, after exposure to antigen and selection, allow affinity maturation for a particular antigen. This chain is Immunoglobulin kappa variable 1-17, found in Homo sapiens (Human).